Here is a 290-residue protein sequence, read N- to C-terminus: Undecaprenyl-diphosphatase (290 aa).

Helical transmembrane passes span 5–25 (IGIF…YFPI), 44–64 (GTAY…TYFY), 88–108 (VRLF…GLAL), 122–142 (LSVI…SESL), 152–172 (IRVI…VPGV), 195–215 (FSFL…LKVL), 226–246 (PIVA…AWLL), and 255–275 (LVFV…LAAG).

The protein belongs to the UppP family.

Its subcellular location is the cell inner membrane. The catalysed reaction is di-trans,octa-cis-undecaprenyl diphosphate + H2O = di-trans,octa-cis-undecaprenyl phosphate + phosphate + H(+). In terms of biological role, catalyzes the dephosphorylation of undecaprenyl diphosphate (UPP). Confers resistance to bacitracin. In Gloeobacter violaceus (strain ATCC 29082 / PCC 7421), this protein is Undecaprenyl-diphosphatase.